Here is a 327-residue protein sequence, read N- to C-terminus: Petrobactin synthase (327 aa).

The catalysed reaction is N(8)-citryl-spermidine + 3,4-dihydroxybenzoyl-[aryl-carrier protein] = N(1)-(3,4-dihydroxybenzoyl)-N(8)-citryl-spermidine + holo-[aryl-carrier protein] + H(+). The enzyme catalyses N(8),N'(8)-citryl-bis(spermidine) + 3,4-dihydroxybenzoyl-[aryl-carrier protein] = N(1)-(3,4-dihydroxybenzoyl)-N(8),N'(8)-citryl-bis(spermidine) + holo-[aryl-carrier protein] + H(+). It catalyses the reaction N(1)-(3,4-dihydroxybenzoyl)-N(8),N'(8)-citryl-bis(spermidine) + 3,4-dihydroxybenzoyl-[aryl-carrier protein] = petrobactin + holo-[aryl-carrier protein] + H(+). It functions in the pathway siderophore biosynthesis; petrobactin biosynthesis. Its function is as follows. Involved in the biosynthesis of petrobactin, a catecholate siderophore that functions in both iron acquisition and virulence. Transfers the activated 3,4-dihydroxybenzoate (3,4-DHBA) moiety from 3,4-DHBA-loaded AsbD to different receipient molecules, including N-citryl-spermidine, N8,N'8-citryl-bis(spermidine) and N1-(3,4-dihydroxybenzoyl)-N8,N'8-citryl-bis(spermidine). Also catalyzes the transfer of the activated 3,4-DHBA moiety from 3,4-DHBA-loaded AsbD to spermidine to generate DHB-spermidine (DHB-SP). The chain is Petrobactin synthase from Bacillus anthracis.